The sequence spans 80 residues: Small ribosomal subunit protein uS17c (80 aa).

This sequence belongs to the universal ribosomal protein uS17 family. Part of the 30S ribosomal subunit.

Its subcellular location is the plastid. The protein localises to the chloroplast. In terms of biological role, one of the primary rRNA binding proteins, it binds specifically to the 5'-end of 16S ribosomal RNA. The polypeptide is Small ribosomal subunit protein uS17c (rps17) (Gracilaria tenuistipitata var. liui (Red alga)).